Consider the following 493-residue polypeptide: Cytochrome P450 2W1 (493 aa).

Positions 1–23 are cleaved as a signal peptide; the sequence is MALLLLGVWGILLLLGLWGLLQG. An N-linked (GlcNAc...) asparagine glycan is attached at asparagine 180. Residue cysteine 436 coordinates heme.

Belongs to the cytochrome P450 family. Heme serves as cofactor. In terms of tissue distribution, detected in colon, ileum, and testes.

Its subcellular location is the endoplasmic reticulum lumen. It localises to the cell membrane. It is found in the microsome membrane. It catalyses the reaction all-trans-retinoate + reduced [NADPH--hemoprotein reductase] + O2 = all-trans-4-hydroxyretinoate + oxidized [NADPH--hemoprotein reductase] + H2O + H(+). The catalysed reaction is 1-(9Z-octadecenoyl)-sn-glycero-3-phosphocholine + reduced [NADPH--hemoprotein reductase] + O2 = 1-[8-hydroxy-(9Z)-octadecenoyl]-sn-glycero-3-phosphocholine + oxidized [NADPH--hemoprotein reductase] + H2O + H(+). The enzyme catalyses 1-(9Z-octadecenoyl)-sn-glycero-3-phosphocholine + reduced [NADPH--hemoprotein reductase] + O2 = 1-[11-hydroxy-(9Z)-octadecenoyl]-sn-glycero-3-phosphocholine + oxidized [NADPH--hemoprotein reductase] + H2O + H(+). It carries out the reaction 1-(9Z-octadecenoyl)-sn-glycero-3-phosphocholine + reduced [NADPH--hemoprotein reductase] + O2 = 1-[(9S,10R)-epoxy-octadecanoyl]-sn-glycero-3-phosphocholine + oxidized [NADPH--hemoprotein reductase] + H2O + H(+). It catalyses the reaction 1-(9Z-octadecenoyl)-sn-glycero-3-phosphocholine + reduced [NADPH--hemoprotein reductase] + O2 = 1-[(9R,10S)-epoxy-octadecanoyl]-sn-glycero-3-phosphocholine + oxidized [NADPH--hemoprotein reductase] + H2O + H(+). Its function is as follows. A cytochrome P450 monooxygenase that may play a role in retinoid and phospholipid metabolism. Catalyzes the hydroxylation of saturated carbon hydrogen bonds. Hydroxylates all trans-retinoic acid (atRA) to 4-hydroxyretinoate and may regulate atRA clearance. Other retinoids such as all-trans retinol and all-trans retinal are potential endogenous substrates. Catalyzes both epoxidation of double bonds and hydroxylation of carbon hydrogen bonds of the fatty acyl chain of 1-acylphospholipids/2-lysophospholipids. Can metabolize various lysophospholipids classes including lysophosphatidylcholines (LPCs), lysophosphatidylinositols (LPIs), lysophosphatidylserines (LPSs), lysophosphatidylglycerols (LPGs), lysophosphatidylethanolamines (LPEs) and lysophosphatidic acids (LPAs). Has low or no activity toward 2-acylphospholipids/1-lysophospholipids, diacylphospholipids and free fatty acids. May play a role in tumorigenesis by activating procarcinogens such as aflatoxin B1, polycyclic aromatic hydrocarbon dihydrodiols and aromatic amines. Mechanistically, uses molecular oxygen inserting one oxygen atom into a substrate, and reducing the second into a water molecule, with two electrons provided by NADPH via cytochrome P450 reductase (CPR; NADPH-ferrihemoprotein reductase). This Mus musculus (Mouse) protein is Cytochrome P450 2W1 (Cyp2w1).